The sequence spans 134 residues: Putative oxidoreductase CatD (134 aa).

The next 4 helical transmembrane spans lie at phenylalanine 5 to leucine 25, phenylalanine 46 to leucine 66, isoleucine 70 to alanine 90, and proline 91 to leucine 111.

Belongs to the DoxX family.

The protein resides in the cell membrane. Its function is as follows. Essential for growth and viability in the presence of catechol and probably involved in the detoxification of catechol. The protein is Putative oxidoreductase CatD (catD) of Bacillus subtilis (strain 168).